Reading from the N-terminus, the 254-residue chain is 4-hydroxy-tetrahydrodipicolinate reductase (254 aa).

NAD(+) contacts are provided by residues 10-15 (GATGKV) and 101-103 (GTT). The active-site Proton donor/acceptor is the His-157. (S)-2,3,4,5-tetrahydrodipicolinate is bound at residue His-158. Catalysis depends on Lys-161, which acts as the Proton donor. 167–168 (GT) provides a ligand contact to (S)-2,3,4,5-tetrahydrodipicolinate.

The protein belongs to the DapB family.

It localises to the cytoplasm. The catalysed reaction is (S)-2,3,4,5-tetrahydrodipicolinate + NAD(+) + H2O = (2S,4S)-4-hydroxy-2,3,4,5-tetrahydrodipicolinate + NADH + H(+). It catalyses the reaction (S)-2,3,4,5-tetrahydrodipicolinate + NADP(+) + H2O = (2S,4S)-4-hydroxy-2,3,4,5-tetrahydrodipicolinate + NADPH + H(+). Its pathway is amino-acid biosynthesis; L-lysine biosynthesis via DAP pathway; (S)-tetrahydrodipicolinate from L-aspartate: step 4/4. Its function is as follows. Catalyzes the conversion of 4-hydroxy-tetrahydrodipicolinate (HTPA) to tetrahydrodipicolinate. In Symbiobacterium thermophilum (strain DSM 24528 / JCM 14929 / IAM 14863 / T), this protein is 4-hydroxy-tetrahydrodipicolinate reductase.